A 694-amino-acid polypeptide reads, in one-letter code: Polyphosphate kinase (694 aa).

Asparagine 45 serves as a coordination point for ATP. Positions 367 and 397 each coordinate Mg(2+). Histidine 427 (phosphohistidine intermediate) is an active-site residue. ATP contacts are provided by tyrosine 460, arginine 553, and histidine 580.

Belongs to the polyphosphate kinase 1 (PPK1) family. It depends on Mg(2+) as a cofactor. In terms of processing, an intermediate of this reaction is the autophosphorylated ppk in which a phosphate is covalently linked to a histidine residue through a N-P bond.

The catalysed reaction is [phosphate](n) + ATP = [phosphate](n+1) + ADP. In terms of biological role, catalyzes the reversible transfer of the terminal phosphate of ATP to form a long-chain polyphosphate (polyP). The polypeptide is Polyphosphate kinase (Campylobacter jejuni subsp. jejuni serotype O:6 (strain 81116 / NCTC 11828)).